Consider the following 150-residue polypeptide: 3-hydroxyacyl-[acyl-carrier-protein] dehydratase FabZ (150 aa).

Histidine 51 is a catalytic residue.

Belongs to the thioester dehydratase family. FabZ subfamily.

It is found in the cytoplasm. The enzyme catalyses a (3R)-hydroxyacyl-[ACP] = a (2E)-enoyl-[ACP] + H2O. Its function is as follows. Involved in unsaturated fatty acids biosynthesis. Catalyzes the dehydration of short chain beta-hydroxyacyl-ACPs and long chain saturated and unsaturated beta-hydroxyacyl-ACPs. This is 3-hydroxyacyl-[acyl-carrier-protein] dehydratase FabZ from Legionella pneumophila subsp. pneumophila (strain Philadelphia 1 / ATCC 33152 / DSM 7513).